Reading from the N-terminus, the 666-residue chain is Heparin-sulfate lyase (666 aa).

The signal sequence occupies residues 1-22 (MNKTFKYIVLLALACFVGKANA). The active-site Proton acceptor is the Tyr-301.

It belongs to the polysaccharide lyase 12 family.

The protein resides in the periplasm. The enzyme catalyses Elimination of sulfate, appears to act on linkages between N-acetyl-D-glucosamine and uronate. Product is an unsaturated sugar.. Its function is as follows. Specifically cleaves heparan sulfate-rich regions of acidic polysaccharides. Also able to degrade heparin and hyaluronic acid. Does not act on N,O-desulfated glucosamine or N-acetyl-O-sulfated glucosamine linkages. Functions in cleaving metazoan heparan sulfate and providing carbon, nitrogen and sulfate sources for microorganisms. This chain is Heparin-sulfate lyase (hepC), found in Bacteroides stercoris.